Consider the following 154-residue polypeptide: Methylglyoxal synthase (154 aa).

In terms of domain architecture, MGS-like spans 6-154 (QSLPAKKNIA…KYLATRQIDI (149 aa)). Residues histidine 19, lysine 23, 45–48 (TGTT), and 65–66 (SG) contribute to the substrate site. Aspartate 71 functions as the Proton donor/acceptor in the catalytic mechanism. Histidine 98 serves as a coordination point for substrate.

This sequence belongs to the methylglyoxal synthase family.

It catalyses the reaction dihydroxyacetone phosphate = methylglyoxal + phosphate. Catalyzes the formation of methylglyoxal from dihydroxyacetone phosphate. The protein is Methylglyoxal synthase of Pseudoalteromonas translucida (strain TAC 125).